The following is a 156-amino-acid chain: Small ribosomal subunit protein uS7c (156 aa).

It belongs to the universal ribosomal protein uS7 family. As to quaternary structure, part of the 30S ribosomal subunit.

The protein resides in the plastid. It is found in the chloroplast. Its function is as follows. One of the primary rRNA binding proteins, it binds directly to 16S rRNA where it nucleates assembly of the head domain of the 30S subunit. This chain is Small ribosomal subunit protein uS7c (rps7), found in Chlorella vulgaris (Green alga).